Here is a 1183-residue protein sequence, read N- to C-terminus: Putative ATP-dependent RNA helicase PB1A10.06c (1183 aa).

2 disordered regions span residues methionine 1–leucine 92 and glutamate 165–arginine 315. The segment covering valine 60 to glutamate 81 has biased composition (basic and acidic residues). Low complexity-rich tracts occupy residues glutamate 165–threonine 176 and threonine 184–threonine 196. A compositionally biased stretch (acidic residues) spans glutamate 224 to serine 251. Residues glutamate 252–proline 270 show a composition bias toward basic and acidic residues. Residues glutamate 292–aspartate 308 show a composition bias toward acidic residues. A Helicase ATP-binding domain is found at methionine 408 to isoleucine 585. Glycine 421–threonine 428 provides a ligand contact to ATP. Positions aspartate 522 to histidine 525 match the DEAH box motif. In terms of domain architecture, Helicase C-terminal spans alanine 611–asparagine 831. Positions glutamate 673 to aspartate 683 are enriched in acidic residues. Residues glutamate 673 to aspartate 696 are disordered.

The protein belongs to the DEAD box helicase family. DEAH subfamily.

It localises to the nucleus. Its subcellular location is the nucleolus. It carries out the reaction ATP + H2O = ADP + phosphate + H(+). In Schizosaccharomyces pombe (strain 972 / ATCC 24843) (Fission yeast), this protein is Putative ATP-dependent RNA helicase PB1A10.06c.